A 141-amino-acid chain; its full sequence is Nucleoside diphosphate kinase (141 aa).

Positions 11, 59, 87, 93, 104, and 114 each coordinate ATP. Catalysis depends on His117, which acts as the Pros-phosphohistidine intermediate.

The protein belongs to the NDK family. In terms of assembly, homotetramer. It depends on Mg(2+) as a cofactor.

The protein resides in the cytoplasm. The catalysed reaction is a 2'-deoxyribonucleoside 5'-diphosphate + ATP = a 2'-deoxyribonucleoside 5'-triphosphate + ADP. The enzyme catalyses a ribonucleoside 5'-diphosphate + ATP = a ribonucleoside 5'-triphosphate + ADP. Major role in the synthesis of nucleoside triphosphates other than ATP. The ATP gamma phosphate is transferred to the NDP beta phosphate via a ping-pong mechanism, using a phosphorylated active-site intermediate. In Bordetella bronchiseptica (strain ATCC BAA-588 / NCTC 13252 / RB50) (Alcaligenes bronchisepticus), this protein is Nucleoside diphosphate kinase.